Reading from the N-terminus, the 321-residue chain is Leucine-rich repeat-containing protein 46 (321 aa).

LRR repeat units lie at residues 45–66 (ELQTVRLDREGITTIRNLEGLK), 67–88 (NLHSLYLQGNKIQQIENLACVP), 89–110 (SLRFLSLAGNQIRQVENLLDLP), and 111–132 (CLQFLDLSENLIETLKLDEFPQ). One can recognise an LRRCT domain in the interval 142 to 184 (NSCTNQDSYRELVIEALPLLLDLDGQPVMERWISDEEDEASSE). Phosphoserine occurs at positions 175 and 182. Residues 198 to 222 (RGFLKELEQELSRHREHRQQAALTQ) are a coiled coil. The interval 235 to 321 (NLPLLPGVPM…TKTMAKRSKK (87 aa)) is disordered.

It is found in the cell projection. The protein localises to the cilium. The protein resides in the flagellum. Functionally, required for normal spermatogenesis and male fertility. Plays an important role in sperm flagellum biogenesis. In Macaca fascicularis (Crab-eating macaque), this protein is Leucine-rich repeat-containing protein 46 (LRRC46).